Reading from the N-terminus, the 226-residue chain is Ribonuclease 3 (226 aa).

Residues 5 to 127 form the RNase III domain; it reads TFQRGDPIGH…IVAAIYLDCG (123 aa). Glu-40 contacts Mg(2+). Asp-44 is a catalytic residue. Positions 113 and 116 each coordinate Mg(2+). The active site involves Glu-116. The 71-residue stretch at 154–224 folds into the DRBM domain; it reads DPKTRLQEWL…ATLVIAQLDS (71 aa).

It belongs to the ribonuclease III family. As to quaternary structure, homodimer. Mg(2+) serves as cofactor.

It localises to the cytoplasm. The enzyme catalyses Endonucleolytic cleavage to 5'-phosphomonoester.. Digests double-stranded RNA. Involved in the processing of primary rRNA transcript to yield the immediate precursors to the large and small rRNAs (23S and 16S). Processes some mRNAs, and tRNAs when they are encoded in the rRNA operon. Processes pre-crRNA and tracrRNA of type II CRISPR loci if present in the organism. In Xanthomonas axonopodis pv. citri (strain 306), this protein is Ribonuclease 3.